The chain runs to 633 residues: MSLQPQAETLSFEAEVKQLLHLVAHSLYSNKEIFLRELISNSSDAADKLRYQALSDAALYENDADLKIWIDFDKDNRTITIRDNGIGMSREEVIENLGTIAKSGTRAFRELLAEKKAEDSQLIGQFGVGFYSAFIVADRVVVRTRRAGMKADQGVEWESTGEGEYTLKNIDKPTRGTEVVLHLKESEEEFLDSLRLRAIITKYSDHILLPIVMKKIKTSGADDEDKNETPEEEVVNRANALWVLPKDKIKDEEYKELYKHIAHDFEDPLAWVHNKVEGKLEYTTLLYIPARAPFDLWNREGQRGLKLYVKRIFIMDDAEHFMPMYLRFVKGIVDSNDLPLNISRELLQSNEVINKIKAGCVKRILSLLEDLAKNDKEKYASFWKAFGQVLKEGPAEDFANRDRIANLLRFASTHNDTDEQNVSLQDYISRMKPEQNKIYYIVADTYTSAKNSPLLEVFRKKDIEVLLMSDRVDEWLVAHLNEFEGKSLQSIAKGTLDLGDLEKEEKVETEKFEKDFDELLKQFKEVLGEKIKDVRITHRLTDSPTCVVFDENEMSGHLQRLLIQTGQDFMQAKPILEINPSHPLILRVKNESDKTRFNRWADLLLNQALLAEGEQLKDPASFVKGLNELLLDS.

The segment at 1–344 (MSLQPQAETL…SNDLPLNISR (344 aa)) is a; substrate-binding. The interval 345-560 (ELLQSNEVIN…ENEMSGHLQR (216 aa)) is b. The segment at 561 to 633 (LLIQTGQDFM…KGLNELLLDS (73 aa)) is c.

This sequence belongs to the heat shock protein 90 family. In terms of assembly, homodimer.

It localises to the cytoplasm. Its function is as follows. Molecular chaperone. Has ATPase activity. This Coxiella burnetii (strain RSA 331 / Henzerling II) protein is Chaperone protein HtpG.